The chain runs to 635 residues: Sodium- and chloride-dependent creatine transporter 1 (635 aa).

Positions 1 to 11 are enriched in polar residues; the sequence is MANKSTENGIY. The disordered stretch occupies residues 1 to 27; that stretch reads MANKSTENGIYSVSGEEKKGPLIAPGP. Residues 1-60 lie on the Cytoplasmic side of the membrane; that stretch reads MANKSTENGIYSVSGEEKKGPLIAPGPDGAPAKGDGPAALGAPGSLLAVPPRETWTRQMD. A helical membrane pass occupies residues 61-81; it reads FIMSCVGFAVGLGNVWRFPYL. The Extracellular portion of the chain corresponds to 82-87; that stretch reads CYKNGG. A helical transmembrane segment spans residues 88 to 108; the sequence is GVFLIPYILIALIGGIPIFFL. At 109 to 138 the chain is on the cytoplasmic side; it reads EISLGQFMKAGSINVWNICPLFKGLGYASM. The chain crosses the membrane as a helical span at residues 139 to 159; that stretch reads VIVFYCNTYYIMVLAWGFYYL. The Extracellular segment spans residues 160–230; sequence VKSFTTTLPW…LSEGLEVPGA (71 aa). Residues Asn192 and Asn197 are each glycosylated (N-linked (GlcNAc...) asparagine). Residues 231 to 251 form a helical membrane-spanning segment; it reads LNWEVTLCLLTCWVLVYFCVW. At 252-269 the chain is on the cytoplasmic side; the sequence is KGVKSTGKIVYFTATFPY. A helical transmembrane segment spans residues 270–290; that stretch reads VVLVVLLVRGVLLPGALDGII. The Extracellular portion of the chain corresponds to 291-304; it reads YYLKPDWSKLASPQ. A helical transmembrane segment spans residues 305–325; sequence VWIDAGTQIFFSYAIGLGALT. Residues 326-341 lie on the Cytoplasmic side of the membrane; that stretch reads ALGSYNRFNNNCYKDA. A helical membrane pass occupies residues 342–362; sequence IILALINSGTSFFAGFVVFSI. The Extracellular portion of the chain corresponds to 363–394; the sequence is LGFMATEQGVHISKVAESGPGLAFIAYPRAVT. Residues 395 to 415 form a helical membrane-spanning segment; the sequence is LMPVAPLWAALFFFMLLLLGL. The Cytoplasmic portion of the chain corresponds to 416–444; that stretch reads DSQFVGVEGFITGLLDLLPASYYFRFQRE. Residues 445–465 form a helical membrane-spanning segment; the sequence is ISVALCCTICFVIDLSMVTDG. Residues 466–479 are Extracellular-facing; it reads GMYVFQLFDYYSAS. Residues 480 to 500 form a helical membrane-spanning segment; sequence GTTLLWQAFWECVVVAWVYGA. The Cytoplasmic portion of the chain corresponds to 501–520; it reads DRFMDDVACMIGYRPCPWMK. Residues 521 to 541 form a helical membrane-spanning segment; the sequence is WCWSFFTPLVCMGIFIFNVVY. The Extracellular segment spans residues 542–560; sequence HEPLVYNNTYVYPWWGEAV. Residue Asn548 is glycosylated (N-linked (GlcNAc...) asparagine). A helical membrane pass occupies residues 561–581; the sequence is GWAFALSSMLCVPLHLLGCLL. Residues 582-635 are Cytoplasmic-facing; that stretch reads RAKGTMAERWQHLTQPIWGLHHLEYRAQDSDVRGLTTLTPVSESSKVVVVESVM. A phosphothreonine mark is found at Thr617 and Thr620. Ser623 bears the Phosphoserine mark.

It belongs to the sodium:neurotransmitter symporter (SNF) (TC 2.A.22) family. SLC6A8 subfamily. Glycosylated.

It localises to the cell membrane. The protein resides in the apical cell membrane. It catalyses the reaction creatine(out) + chloride(out) + 2 Na(+)(out) = creatine(in) + chloride(in) + 2 Na(+)(in). Its function is as follows. Creatine:sodium symporter which mediates the uptake of creatine. Plays an important role in supplying creatine to the brain via the blood-brain barrier. This chain is Sodium- and chloride-dependent creatine transporter 1 (SLC6A8), found in Bos taurus (Bovine).